The primary structure comprises 152 residues: Small ribosomal subunit protein uS15 (152 aa).

Residues M1–G10 are compositionally biased toward basic residues. Positions M1–E24 are disordered.

The protein belongs to the universal ribosomal protein uS15 family. Part of the 30S ribosomal subunit.

In Methanoculleus marisnigri (strain ATCC 35101 / DSM 1498 / JR1), this protein is Small ribosomal subunit protein uS15.